The primary structure comprises 118 residues: Small ribosomal subunit protein uS13 (118 aa).

It belongs to the universal ribosomal protein uS13 family. As to quaternary structure, part of the 30S ribosomal subunit. Forms a loose heterodimer with protein S19. Forms two bridges to the 50S subunit in the 70S ribosome.

Its function is as follows. Located at the top of the head of the 30S subunit, it contacts several helices of the 16S rRNA. In the 70S ribosome it contacts the 23S rRNA (bridge B1a) and protein L5 of the 50S subunit (bridge B1b), connecting the 2 subunits; these bridges are implicated in subunit movement. Contacts the tRNAs in the A and P-sites. This chain is Small ribosomal subunit protein uS13, found in Carsonella ruddii (strain PV).